We begin with the raw amino-acid sequence, 313 residues long: Glyoxylate/hydroxypyruvate reductase A HPR2 (313 aa).

Residues 152–155 (LGRI), 174–176 (SRT), 230–232 (IGR), and Asp256 each bind NADP(+). The active site involves Arg232. Glu261 is a catalytic residue. The active-site Proton donor is His279. Residue 279–281 (HVG) participates in NADP(+) binding.

This sequence belongs to the D-isomer specific 2-hydroxyacid dehydrogenase family. GyaR subfamily. Homodimer.

Its subcellular location is the cytoplasm. The catalysed reaction is glycolate + NADP(+) = glyoxylate + NADPH + H(+). It carries out the reaction (R)-glycerate + NAD(+) = 3-hydroxypyruvate + NADH + H(+). The enzyme catalyses (R)-glycerate + NADP(+) = 3-hydroxypyruvate + NADPH + H(+). Its activity is regulated as follows. Strongly inhibited by oxalate. In terms of biological role, catalyzes the NADPH-dependent reduction of glyoxylate and hydroxypyruvate (HP) into glycolate and glycerate in the cytoplasm, thus providing a cytosolic bypass to the photorespiratory core cycle. Mostly active in the presence of NADPH and hydroxypyruvate. The chain is Glyoxylate/hydroxypyruvate reductase A HPR2 (HPR2) from Arabidopsis thaliana (Mouse-ear cress).